The primary structure comprises 55 residues: Photosystem I reaction center subunit IX (55 aa).

A helical membrane pass occupies residues 7–27; sequence YLSVAPVLSTLWFGSLAGLLI.

It belongs to the PsaJ family.

The protein resides in the plastid. Its subcellular location is the chloroplast thylakoid membrane. May help in the organization of the PsaE and PsaF subunits. This chain is Photosystem I reaction center subunit IX, found in Gossypium barbadense (Sea Island cotton).